The following is a 240-amino-acid chain: Myogenic factor 6 (240 aa).

Residues 91–142 form the bHLH domain; that stretch reads DRRKAATLRERRRLKKINEAFEALKRRTVANPNQRLPKVEILRSAINYIERL.

As to quaternary structure, efficient DNA binding requires dimerization with another bHLH protein. Skeletal muscle.

Its subcellular location is the nucleus. Involved in muscle differentiation (myogenic factor). Induces fibroblasts to differentiate into myoblasts. Probable sequence specific DNA-binding protein. The sequence is that of Myogenic factor 6 (myf6) from Xenopus laevis (African clawed frog).